Reading from the N-terminus, the 284-residue chain is Acetylglutamate kinase (284 aa).

Substrate is bound by residues 64–65, Arg86, and Asn181; that span reads GG.

This sequence belongs to the acetylglutamate kinase family. ArgB subfamily.

It localises to the cytoplasm. It carries out the reaction N-acetyl-L-glutamate + ATP = N-acetyl-L-glutamyl 5-phosphate + ADP. The protein operates within amino-acid biosynthesis; L-arginine biosynthesis; N(2)-acetyl-L-ornithine from L-glutamate: step 2/4. Catalyzes the ATP-dependent phosphorylation of N-acetyl-L-glutamate. This Nitratiruptor sp. (strain SB155-2) protein is Acetylglutamate kinase.